A 503-amino-acid polypeptide reads, in one-letter code: MDIPIPTRQLFINGDWKAPVLNKRIPVINPATQNIIGDIPAATKEDVDVAVAAAKTALTRNKGADWATASGAVRARYLRAIAAKVTEKKPELAKLESIDCGKPLDEAAWDIDDVAGCFEYYADLAEKLDARQKAPVSLPMDTFKSHVLREPIGVVGLITPWNYPMLMATWKVAPALAAGCAAILKPSELASLTCLELGEICKEVGLPPGVLNILTGLGPEAGAPLATHPDVDKVAFTGSSATGSKIMTAAAQLVKPVSLELGGKSPLVVFEDVDLDKAAEWAIFGCFWTNGQICSATSRLILHESIATEFLNRIVKWIKNIKISDPLEEGCRLGPVVSEGQYEKILKFVSNAKSEGATILTGGSRPEHLKKGFFIEPTIITDVTTNMQIWREEVFGPVLCVKTFSTEEEAIDLANDTVYGLGAAVISNDLERCERVTKAFKAGIVWVNCSQPCFTQAPWGGVKRSGFGRELGEWGLDNYLSVKQVTQYISEEPWGWYQPPAKL.

Residues isoleucine 28 and aspartate 99 each coordinate Na(+). NAD(+)-binding residues include tryptophan 161 and lysine 185. Leucine 189 contributes to the Na(+) binding site. Serine 239 is a binding site for NAD(+). Glutamate 260 acts as the Proton acceptor in catalysis. The active-site Nucleophile is the cysteine 294. The short motif at 501 to 503 (AKL) is the Microbody targeting signal element.

This sequence belongs to the aldehyde dehydrogenase family. As to quaternary structure, forms homodimers.

The protein resides in the peroxisome. It carries out the reaction 3-aminopropanal + NAD(+) + H2O = beta-alanine + NADH + 2 H(+). The catalysed reaction is 4-aminobutanal + NAD(+) + H2O = 4-aminobutanoate + NADH + 2 H(+). It catalyses the reaction 4-guanidinobutanal + NAD(+) + H2O = 4-guanidinobutanoate + NADH + 2 H(+). It functions in the pathway amine and polyamine biosynthesis; betaine biosynthesis via choline pathway; betaine from betaine aldehyde: step 1/1. Dehydrogenase that catalyzes the oxidation of several aminoaldehydes. Metabolizes and detoxifies aldehyde products of polyamine degradation to non-toxic amino acids. Catalyzes the oxidation of 3-aminopropanal to beta-alanine. Catalyzes the oxidation of 4-aminobutanal to 4-aminobutanoate. Catalyzes the oxidation of 4-guanidinobutanal to 4-guanidinobutanoate. The chain is Aminoaldehyde dehydrogenase 2, peroxisomal from Pisum sativum (Garden pea).